A 257-amino-acid chain; its full sequence is Putative B3 domain-containing protein At2g27410 (257 aa).

Residues 5 to 50 (ARTTKINHFRGTSTTQNPNRGLEPSPSSYVTRRSKEKRPINVEKRS) are disordered. The span at 8–35 (TKINHFRGTSTTQNPNRGLEPSPSSYVT) shows a compositional bias: polar residues. The TF-B3 DNA-binding region spans 115–209 (TPDFLTEDET…KLCFALTPKN (95 aa)). A disordered region spans residues 212–257 (RGNSLPGGDGASTSGESGQVPLPIPPARYSSNSGQGCSGESSSSSS). A compositionally biased stretch (low complexity) spans 241 to 257 (SSNSGQGCSGESSSSSS).

The protein localises to the nucleus. In Arabidopsis thaliana (Mouse-ear cress), this protein is Putative B3 domain-containing protein At2g27410.